The sequence spans 160 residues: UPF0178 protein BB1267 (160 aa).

It belongs to the UPF0178 family.

In Bordetella bronchiseptica (strain ATCC BAA-588 / NCTC 13252 / RB50) (Alcaligenes bronchisepticus), this protein is UPF0178 protein BB1267.